Here is a 101-residue protein sequence, read N- to C-terminus: Small ribosomal subunit protein uS14 (101 aa).

This sequence belongs to the universal ribosomal protein uS14 family. Part of the 30S ribosomal subunit. Contacts proteins S3 and S10.

Binds 16S rRNA, required for the assembly of 30S particles and may also be responsible for determining the conformation of the 16S rRNA at the A site. This chain is Small ribosomal subunit protein uS14, found in Ehrlichia canis (strain Jake).